An 89-amino-acid chain; its full sequence is MTLANIKSAKKRAVQSEKRRQHNASQRSMMRTFIKKVYAAIATGDKAASQTAFVEMQKVVDRMASKGLIHANKAANHKAKLVAQIKKLA.

The tract at residues Met-1–Ser-28 is disordered.

The protein belongs to the bacterial ribosomal protein bS20 family.

Its function is as follows. Binds directly to 16S ribosomal RNA. The polypeptide is Small ribosomal subunit protein bS20 (Haemophilus ducreyi (strain 35000HP / ATCC 700724)).